The following is a 527-amino-acid chain: Arginine--tRNA ligase (527 aa).

Positions 111–121 (ANPTGPLHIGH) match the 'HIGH' region motif.

Belongs to the class-I aminoacyl-tRNA synthetase family. In terms of assembly, monomer.

Its subcellular location is the cytoplasm. The catalysed reaction is tRNA(Arg) + L-arginine + ATP = L-arginyl-tRNA(Arg) + AMP + diphosphate. In Campylobacter concisus (strain 13826), this protein is Arginine--tRNA ligase.